The following is a 511-amino-acid chain: MSGVWGAGGPRCQAALAVLASLCRARPPPLGLDVETCQSFELQPPEQSPSAADSGTSVSLLAVVVIVCGVALVAVFFFLFWKLCWMPWRNKEASSPSSANPASEILQSPSSRGNMADKLKDPSALGFLEAAVKISHTSPDIPAEVQMSVKEHIMRHTKLQRQTTEPASSTRHTSFKRHLPRQMHVSSVDYGNELPPAAAEQPTSIGRIKPELYKQKSVDGDEAKSEAAKSCGKINFSLRYDYESETLIVRILKAFDLPAKDFCGSSDPYVKIYLLPDRKCKLQTRVHRKTLNPTFDENFHFPVPYEELADRKLHLSVFDFDRFSRHDMIGEVILDNLFEASDLSRETSIWKDIQYATSESVDLGEIMFSLCYLPTAGRLTLTVIKCRNLKAMDITGYSDPYVKVSLLCDGRRLKKKKTTIKKNTLNPVYNEAIIFDIPPENMDQVSLLISVMDYDRVGHNEIIGVCRVGISAEGLGRDHWNEMLAYPRKPIAHWHCLAEVKKSFKEGTPRL.

The Vesicular segment spans residues 1-59 (MSGVWGAGGPRCQAALAVLASLCRARPPPLGLDVETCQSFELQPPEQSPSAADSGTSVS). The cysteine motif stretch occupies residues 12–38 (CQAALAVLASLCRARPPPLGLDVETCQ). Residues 60–80 (LLAVVVIVCGVALVAVFFFLF) traverse the membrane as a helical segment. Over 81–511 (WKLCWMPWRN…KSFKEGTPRL (431 aa)) the chain is Cytoplasmic. The span at 93–103 (ASSPSSANPAS) shows a compositional bias: low complexity. Disordered regions lie at residues 93–118 (ASSP…MADK) and 157–182 (TKLQ…LPRQ). Residues 160 to 172 (QRQTTEPASSTRH) are compositionally biased toward polar residues. Position 217 is a phosphoserine (S217). 2 consecutive C2 domains span residues 230–351 (SCGK…SIWK) and 362–495 (DLGE…AHWH). 11 residues coordinate Ca(2+): D261, D267, D319, F320, D321, S324, D327, D393, D399, D453, and D455. The segment at 483-511 (MLAYPRKPIAHWHCLAEVKKSFKEGTPRL) is necessary for cell membrane association (isoform 2).

This sequence belongs to the synaptotagmin family. In terms of assembly, isoform 1: Homodimer; disulfide-linked via the cysteine motif. Isoform 1: Can also form heterodimers with SYT3, SYT7, SYT9 and SYT10. Isoform 1: Interacts with STX1A, STX1B and STX2; the interaction is Ca(2+)-dependent. Isoform 2: Is not able to form homodimer and heterodimers. The cofactor is Ca(2+).

Its subcellular location is the cytoplasmic vesicle. The protein localises to the secretory vesicle. The protein resides in the synaptic vesicle membrane. It localises to the membrane. It is found in the cytoplasm. Its subcellular location is the cytosol. The protein localises to the cell membrane. Its function is as follows. May be involved in Ca(2+)-dependent exocytosis of secretory vesicles through Ca(2+) and phospholipid binding to the C2 domain or may serve as Ca(2+) sensors in the process of vesicular trafficking and exocytosis. May mediate Ca(2+)-regulation of exocytosis in acrosomal reaction in sperm. This Rattus norvegicus (Rat) protein is Synaptotagmin-6 (Syt6).